We begin with the raw amino-acid sequence, 405 residues long: 4-hydroxy-3-methylbut-2-en-1-yl diphosphate synthase (ferredoxin) (405 aa).

4 residues coordinate [4Fe-4S] cluster: Cys314, Cys317, Cys348, and Glu355.

Belongs to the IspG family. It depends on [4Fe-4S] cluster as a cofactor.

It carries out the reaction (2E)-4-hydroxy-3-methylbut-2-enyl diphosphate + 2 oxidized [2Fe-2S]-[ferredoxin] + H2O = 2-C-methyl-D-erythritol 2,4-cyclic diphosphate + 2 reduced [2Fe-2S]-[ferredoxin] + H(+). It functions in the pathway isoprenoid biosynthesis; isopentenyl diphosphate biosynthesis via DXP pathway; isopentenyl diphosphate from 1-deoxy-D-xylulose 5-phosphate: step 5/6. Its function is as follows. Converts 2C-methyl-D-erythritol 2,4-cyclodiphosphate (ME-2,4cPP) into 1-hydroxy-2-methyl-2-(E)-butenyl 4-diphosphate. The sequence is that of 4-hydroxy-3-methylbut-2-en-1-yl diphosphate synthase (ferredoxin) from Prochlorococcus marinus subsp. pastoris (strain CCMP1986 / NIES-2087 / MED4).